The chain runs to 1075 residues: Putative type I restriction enzyme MjaVIIP endonuclease subunit (1075 aa).

Belongs to the HsdR family. The type I restriction/modification system is composed of three polypeptides R, M and S.

It carries out the reaction Endonucleolytic cleavage of DNA to give random double-stranded fragments with terminal 5'-phosphates, ATP is simultaneously hydrolyzed.. In terms of biological role, the restriction (R) subunit of a type I restriction enzyme that recognizes 5'-CAAN(7)TGG-3' and cleaves a random distance away. The R subunit is required for both endonuclease and ATPase activities but not for modification. After locating a non-methylated recognition site, the enzyme complex serves as a molecular motor that translocates DNA in an ATP-dependent manner until a collision occurs that triggers cleavage. The protein is Putative type I restriction enzyme MjaVIIP endonuclease subunit of Methanocaldococcus jannaschii (strain ATCC 43067 / DSM 2661 / JAL-1 / JCM 10045 / NBRC 100440) (Methanococcus jannaschii).